The following is a 914-amino-acid chain: Protein translocase subunit SecA (914 aa).

ATP is bound by residues Gln-87, 105–109 (GEGKT), and Asp-508. Residues Cys-898, Cys-900, Cys-909, and His-910 each coordinate Zn(2+).

This sequence belongs to the SecA family. Monomer and homodimer. Part of the essential Sec protein translocation apparatus which comprises SecA, SecYEG and auxiliary proteins SecDF-YajC and YidC. It depends on Zn(2+) as a cofactor.

It is found in the cell inner membrane. It localises to the cytoplasm. It carries out the reaction ATP + H2O + cellular proteinSide 1 = ADP + phosphate + cellular proteinSide 2.. In terms of biological role, part of the Sec protein translocase complex. Interacts with the SecYEG preprotein conducting channel. Has a central role in coupling the hydrolysis of ATP to the transfer of proteins into and across the cell membrane, serving both as a receptor for the preprotein-SecB complex and as an ATP-driven molecular motor driving the stepwise translocation of polypeptide chains across the membrane. This chain is Protein translocase subunit SecA, found in Xylella fastidiosa (strain 9a5c).